The chain runs to 319 residues: tRNA-cytidine(32) 2-sulfurtransferase (319 aa).

The PP-loop motif signature appears at 43-48 (SGGKDS). [4Fe-4S] cluster is bound by residues Cys118, Cys121, and Cys209.

The protein belongs to the TtcA family. As to quaternary structure, homodimer. It depends on Mg(2+) as a cofactor. [4Fe-4S] cluster serves as cofactor.

It is found in the cytoplasm. It carries out the reaction cytidine(32) in tRNA + S-sulfanyl-L-cysteinyl-[cysteine desulfurase] + AH2 + ATP = 2-thiocytidine(32) in tRNA + L-cysteinyl-[cysteine desulfurase] + A + AMP + diphosphate + H(+). The protein operates within tRNA modification. Its function is as follows. Catalyzes the ATP-dependent 2-thiolation of cytidine in position 32 of tRNA, to form 2-thiocytidine (s(2)C32). The sulfur atoms are provided by the cysteine/cysteine desulfurase (IscS) system. The protein is tRNA-cytidine(32) 2-sulfurtransferase of Neisseria gonorrhoeae (strain NCCP11945).